A 247-amino-acid polypeptide reads, in one-letter code: Cell division protein ZapD (247 aa).

The protein belongs to the ZapD family. As to quaternary structure, interacts with FtsZ.

It is found in the cytoplasm. In terms of biological role, cell division factor that enhances FtsZ-ring assembly. Directly interacts with FtsZ and promotes bundling of FtsZ protofilaments, with a reduction in FtsZ GTPase activity. The chain is Cell division protein ZapD from Citrobacter koseri (strain ATCC BAA-895 / CDC 4225-83 / SGSC4696).